The chain runs to 197 residues: Probable low-affinity putrescine importer PlaP (197 aa).

Transmembrane regions (helical) follow at residues 33 to 53 (GVLI…HAGV), 85 to 105 (VLLV…TATA), 107 to 127 (INLG…SQFW), 140 to 160 (FNYL…WINL), and 163 to 183 (SSMV…ACVT).

Belongs to the amino acid-polyamine-organocation (APC) superfamily.

It localises to the cell inner membrane. The catalysed reaction is putrescine(in) + H(+)(in) = putrescine(out) + H(+)(out). Functionally, putrescine importer. This is Probable low-affinity putrescine importer PlaP (plaP) from Klebsiella pneumoniae.